Here is a 452-residue protein sequence, read N- to C-terminus: tRNA modification GTPase MnmE (452 aa).

Residues R21, E78, and K118 each coordinate (6S)-5-formyl-5,6,7,8-tetrahydrofolate. The 162-residue stretch at 214–375 (GMKVVIAGRP…LREHLKKSMG (162 aa)) folds into the TrmE-type G domain. N224 contributes to the K(+) binding site. GTP-binding positions include 224 to 229 (NAGKSS), 243 to 249 (TNIAGTT), and 268 to 271 (DTAG). A Mg(2+)-binding site is contributed by S228. K(+) contacts are provided by T243, I245, and T248. T249 provides a ligand contact to Mg(2+). A (6S)-5-formyl-5,6,7,8-tetrahydrofolate-binding site is contributed by K452.

Belongs to the TRAFAC class TrmE-Era-EngA-EngB-Septin-like GTPase superfamily. TrmE GTPase family. As to quaternary structure, homodimer. Heterotetramer of two MnmE and two MnmG subunits. K(+) is required as a cofactor.

Its subcellular location is the cytoplasm. Functionally, exhibits a very high intrinsic GTPase hydrolysis rate. Involved in the addition of a carboxymethylaminomethyl (cmnm) group at the wobble position (U34) of certain tRNAs, forming tRNA-cmnm(5)s(2)U34. The chain is tRNA modification GTPase MnmE from Actinobacillus pleuropneumoniae serotype 3 (strain JL03).